Reading from the N-terminus, the 517-residue chain is Type II methyltransferase M.CeqI (517 aa).

Disordered stretches follow at residues 1 to 21 (MVVT…RWPR) and 33 to 62 (GRPR…HGRS). Residues 51–62 (RPRRGRAPHGRS) show a composition bias toward basic residues. TPR repeat units follow at residues 283–316 (AEFY…FENN), 361–394 (ALLL…GDHS), and 476–509 (SELA…RTNM).

It catalyses the reaction a 2'-deoxyadenosine in DNA + S-adenosyl-L-methionine = an N(6)-methyl-2'-deoxyadenosine in DNA + S-adenosyl-L-homocysteine + H(+). Its function is as follows. A methylase, recognizes the double-stranded sequence 5'-GATATC-3', methylates A-? on both strands, and protects the DNA from cleavage by the CeqI endonuclease. This chain is Type II methyltransferase M.CeqI (ceqIM), found in Rhodococcus hoagii (Corynebacterium equii).